Here is a 431-residue protein sequence, read N- to C-terminus: MSTIIDVYAREVLDSRGNPTVEVEVYTESGAFGRAIVPSGASTGEHEAVELRDGDKSRYLGKGVMNAVNNVNEAIAPEIVGFDVTDQAGIDRAMIELDGTPNKGKLGANAILGVSMAVAHAAADFVGLPLYRYLGGFNAKQLPTPMMNIINGGSHADNNVDFQEFMILPVGAPTFKESIRMGAEVFHALKAVLHDKGLNTAVGDEGGFAPNLGSNREALEVIIEAIEKAGYKAGENVFLGMDVASSEFYNKETGKYDLAGEGRTGLTSAEMVDFYEELCKDFPIISIEDGLDENDWDGHKLLTERLGDKVQLVGDDLFVTNTQKLAEGIEKGISNSILIKVNQIGTLTETFEAIEMAKRAGYTAVVSHRSGETEDATIADIAVATNAGQIKTGSMSRTDRIAKYNQLLRIEDELGEIAVYDGIKSFYNIKR.

Gln163 contributes to the (2R)-2-phosphoglycerate binding site. Glu205 acts as the Proton donor in catalysis. Asp242, Glu288, and Asp315 together coordinate Mg(2+). (2R)-2-phosphoglycerate is bound by residues Lys340, Arg369, Ser370, and Lys391. The active-site Proton acceptor is Lys340.

This sequence belongs to the enolase family. It depends on Mg(2+) as a cofactor.

Its subcellular location is the cytoplasm. The protein resides in the secreted. It is found in the cell surface. The catalysed reaction is (2R)-2-phosphoglycerate = phosphoenolpyruvate + H2O. It participates in carbohydrate degradation; glycolysis; pyruvate from D-glyceraldehyde 3-phosphate: step 4/5. Functionally, catalyzes the reversible conversion of 2-phosphoglycerate (2-PG) into phosphoenolpyruvate (PEP). It is essential for the degradation of carbohydrates via glycolysis. In Bacillus cereus (strain ZK / E33L), this protein is Enolase.